A 284-amino-acid polypeptide reads, in one-letter code: L-ribulose-5-phosphate 3-epimerase UlaE (284 aa).

Belongs to the L-ribulose-5-phosphate 3-epimerase family.

It carries out the reaction L-ribulose 5-phosphate = L-xylulose 5-phosphate. Its pathway is cofactor degradation; L-ascorbate degradation; D-xylulose 5-phosphate from L-ascorbate: step 3/4. Functionally, catalyzes the isomerization of L-xylulose-5-phosphate to L-ribulose-5-phosphate. Is involved in the anaerobic L-ascorbate utilization. This chain is L-ribulose-5-phosphate 3-epimerase UlaE, found in Escherichia coli (strain ATCC 8739 / DSM 1576 / NBRC 3972 / NCIMB 8545 / WDCM 00012 / Crooks).